We begin with the raw amino-acid sequence, 238 residues long: Ribonuclease PH (238 aa).

Residues R86 and 124-126 (GTR) contribute to the phosphate site.

Belongs to the RNase PH family. In terms of assembly, homohexameric ring arranged as a trimer of dimers.

It catalyses the reaction tRNA(n+1) + phosphate = tRNA(n) + a ribonucleoside 5'-diphosphate. Its function is as follows. Phosphorolytic 3'-5' exoribonuclease that plays an important role in tRNA 3'-end maturation. Removes nucleotide residues following the 3'-CCA terminus of tRNAs; can also add nucleotides to the ends of RNA molecules by using nucleoside diphosphates as substrates, but this may not be physiologically important. Probably plays a role in initiation of 16S rRNA degradation (leading to ribosome degradation) during starvation. The protein is Ribonuclease PH of Haemophilus influenzae (strain PittGG).